The following is a 637-amino-acid chain: Putative pentatricopeptide repeat-containing protein At5g65820 (637 aa).

PPR repeat units lie at residues 146-180 (SIEVYKSMVKILSKMRQFGAVWGLIEEMRKENPQL), 182-216 (EPELFVVLVQRFASADMVKKAIEVLDEMPKFGFEP), 217-247 (DEYVFGCLLDALCKHGSVKDAAKLFEDMRMR), 251-285 (NLRYFTSLLYGWCRVGKMMEAKYVLVQMNEAGFEP), 286-320 (DIVDYTNLLSGYANAGKMADAYDLLRDMRRRGFEP), 321-355 (NANCYTVLIQALCKVDRMEEAMKVFVEMERYECEA), 356-390 (DVVTYTALVSGFCKWGKIDKCYIVLDDMIKKGLMP), 391-425 (SELTYMHIMVAHEKKESFEECLELMEKMRQIEYHP), 426-460 (DIGIYNVVIRLACKLGEVKEAVRLWNEMEENGLSP), 461-495 (GVDTFVIMINGLASQGCLLEASDHFKEMVTRGLFS), 498-532 (QYGTLKLLLNTVLKDKKLEMAKDVWSCITSKGACE), and 534-568 (NVLSWTIWIHALFSKGYEKEACSYCIEMIEMDFMP). Residues 616–630 (QDLTEKAKSKQDREG) show a composition bias toward basic and acidic residues. Positions 616-637 (QDLTEKAKSKQDREGKKKQRSR) are disordered.

This sequence belongs to the PPR family. P subfamily.

The chain is Putative pentatricopeptide repeat-containing protein At5g65820 from Arabidopsis thaliana (Mouse-ear cress).